The following is a 273-amino-acid chain: MYRLAAFDMDGTLLMRDHKIGSITLNALHQLADAGVTLTFATGRHYLDMKGILSHSGLNGYLITGNSTRVCDAEGNPLYGMDLPAELVEFVLRTPWQTNASIHLFRDDGWFTDRNDPDLLIAHTTSGFHFQLTEWDELPLTGNHKFCFIASHQELVELKAQLEQQMSGEADFCFSATDCLEVLPRGCNKGVALEKLSHHLDLTLADCMAFGDAMNDKEMLSRVGRGLVMGNALPQLKQELPQLQIIGRCEQQGVAHYLHHWLSSPHLTYSPEF.

The Nucleophile role is filled by aspartate 8. Residues aspartate 8, aspartate 10, and aspartate 212 each coordinate Mg(2+).

Belongs to the HAD-like hydrolase superfamily. Cof family. The cofactor is Mg(2+).

It catalyses the reaction 4-amino-2-methyl-5-(diphosphooxymethyl)pyrimidine + H2O = 4-amino-2-methyl-5-(phosphooxymethyl)pyrimidine + phosphate + H(+). In terms of biological role, catalyzes the hydrolysis of 4-amino-2-methyl-5-hydroxymethylpyrimidine pyrophosphate (HMP-PP) to 4-amino-2-methyl-5-hydroxymethylpyrimidine phosphate (HMP-P). The protein is HMP-PP phosphatase of Yersinia pseudotuberculosis serotype IB (strain PB1/+).